Consider the following 153-residue polypeptide: MKERDAAPAERGKPATYTGDKKAKMAAKTNKKWVRLATVFAYVLSVSLAAIVLAVYYSLIWQPVGAGTSGGAAGPPPGGSNATGPSGTSGAAAAGPNTTGSSRREAPRDVPPLQAARPAPPEPPADSPPAGPLERPRGPDEDEEETAAAPGSR.

Residues 1-23 (MKERDAAPAERGKPATYTGDKKA) are compositionally biased toward basic and acidic residues. The tract at residues 1–24 (MKERDAAPAERGKPATYTGDKKAK) is disordered. The chain crosses the membrane as a helical span at residues 36–56 (LATVFAYVLSVSLAAIVLAVY). A disordered region spans residues 66 to 153 (AGTSGGAAGP…EETAAAPGSR (88 aa)). Residues 79-101 (GSNATGPSGTSGAAAAGPNTTGS) are compositionally biased toward low complexity. The segment covering 118 to 131 (PAPPEPPADSPPAG) has biased composition (pro residues).

Its subcellular location is the membrane. In Homo sapiens (Human), this protein is Putative transmembrane protein INAFM2.